We begin with the raw amino-acid sequence, 542 residues long: Adenosylmethionine-8-amino-7-oxononanoate aminotransferase (542 aa).

Residue 170–171 (GS) coordinates pyridoxal 5'-phosphate. Y205 contacts substrate. D311 lines the pyridoxal 5'-phosphate pocket. Positions 340, 375, and 470 each coordinate substrate. Residue K340 is modified to N6-(pyridoxal phosphate)lysine. The interval 509-542 (DGGLWTKRPDGPDNPDKANTPDTPDGARTGETVV) is disordered. Positions 515 to 524 (KRPDGPDNPD) are enriched in basic and acidic residues.

Belongs to the class-III pyridoxal-phosphate-dependent aminotransferase family. BioA subfamily. In terms of assembly, homodimer. Pyridoxal 5'-phosphate serves as cofactor.

Its subcellular location is the cytoplasm. The catalysed reaction is (8S)-8-amino-7-oxononanoate + S-adenosyl-L-methionine = S-adenosyl-4-methylsulfanyl-2-oxobutanoate + (7R,8S)-7,8-diammoniononanoate. It participates in cofactor biosynthesis; biotin biosynthesis; 7,8-diaminononanoate from 8-amino-7-oxononanoate (SAM route): step 1/1. Catalyzes the transfer of the alpha-amino group from S-adenosyl-L-methionine (SAM) to 7-keto-8-aminopelargonic acid (KAPA) to form 7,8-diaminopelargonic acid (DAPA). It is the only aminotransferase known to utilize SAM as an amino donor. The polypeptide is Adenosylmethionine-8-amino-7-oxononanoate aminotransferase (Nitratidesulfovibrio vulgaris (strain ATCC 29579 / DSM 644 / CCUG 34227 / NCIMB 8303 / VKM B-1760 / Hildenborough) (Desulfovibrio vulgaris)).